Reading from the N-terminus, the 573-residue chain is Sulfite reductase [NADPH] hemoprotein beta-component (573 aa).

Residues 1-20 (MAKVELKAPDGPPSDVERIK) are disordered. The [4Fe-4S] cluster site is built by C438, C444, C483, and C487. Residue C487 coordinates siroheme.

Belongs to the nitrite and sulfite reductase 4Fe-4S domain family. Alpha(8)-beta(8). The alpha component is a flavoprotein, the beta component is a hemoprotein. Requires siroheme as cofactor. [4Fe-4S] cluster is required as a cofactor.

The catalysed reaction is hydrogen sulfide + 3 NADP(+) + 3 H2O = sulfite + 3 NADPH + 4 H(+). It functions in the pathway sulfur metabolism; hydrogen sulfide biosynthesis; hydrogen sulfide from sulfite (NADPH route): step 1/1. Component of the sulfite reductase complex that catalyzes the 6-electron reduction of sulfite to sulfide. This is one of several activities required for the biosynthesis of L-cysteine from sulfate. In Geobacillus kaustophilus (strain HTA426), this protein is Sulfite reductase [NADPH] hemoprotein beta-component.